Reading from the N-terminus, the 173-residue chain is Sporulation-specific protein 12 (173 aa).

Residues 1–12 are compositionally biased toward polar residues; the sequence is MSNKASDQSART. The disordered stretch occupies residues 1-56; that stretch reads MSNKASDQSARTASILKTDITRENTITRSSSSNNDNYHHHNNINNYNESAKTGEDA. N-acetylserine is present on serine 2. Phosphoserine occurs at positions 118 and 125. A negative-charged tail region spans residues 159–173; sequence DSEDVEIDEDEEYFY.

Functionally, it is required for meiosis I chromosome division during sporulation. A component of the FEAR (CDC14 early anaphase release) network which promotes CDC14 release from the nucleolus during early anaphase. This chain is Sporulation-specific protein 12 (SPO12), found in Saccharomyces cerevisiae (strain ATCC 204508 / S288c) (Baker's yeast).